Consider the following 249-residue polypeptide: DNA polymerase sliding clamp (249 aa).

It belongs to the PCNA family. In terms of assembly, homotrimer. The subunits circularize to form a toroid; DNA passes through its center. Replication factor C (RFC) is required to load the toroid on the DNA.

Functionally, sliding clamp subunit that acts as a moving platform for DNA processing. Responsible for tethering the catalytic subunit of DNA polymerase and other proteins to DNA during high-speed replication. The protein is DNA polymerase sliding clamp of Thermococcus sibiricus (strain DSM 12597 / MM 739).